The sequence spans 359 residues: Probable cinnamyl alcohol dehydrogenase 8A (359 aa).

Cys-45 provides a ligand contact to Zn(2+). Thr-47 provides a ligand contact to NADP(+). Zn(2+)-binding residues include His-67, Glu-68, Cys-98, Cys-101, Cys-104, Cys-112, and Cys-161. NADP(+) is bound by residues Thr-165, 186–191 (GLGGLG), 209–214 (SSSPAK), Thr-249, Gly-273, and 296–298 (SGG).

The protein belongs to the zinc-containing alcohol dehydrogenase family. In terms of assembly, homodimer. The cofactor is Zn(2+).

It catalyses the reaction (E)-cinnamyl alcohol + NADP(+) = (E)-cinnamaldehyde + NADPH + H(+). It carries out the reaction (E)-coniferol + NADP(+) = (E)-coniferaldehyde + NADPH + H(+). The enzyme catalyses (E)-sinapyl alcohol + NADP(+) = (E)-sinapaldehyde + NADPH + H(+). The catalysed reaction is (E)-4-coumaroyl alcohol + NADP(+) = (E)-4-coumaraldehyde + NADPH + H(+). It catalyses the reaction (E)-caffeyl alcohol + NADP(+) = (E)-caffeyl aldehyde + NADPH + H(+). It participates in aromatic compound metabolism; phenylpropanoid biosynthesis. Involved in lignin biosynthesis. Catalyzes the final step specific for the production of lignin monomers. Catalyzes the NADPH-dependent reduction of coniferaldehyde, 5-hydroxyconiferaldehyde, sinapaldehyde, 4-coumaraldehyde and caffeyl aldehyde to their respective alcohols. The polypeptide is Probable cinnamyl alcohol dehydrogenase 8A (Oryza sativa subsp. japonica (Rice)).